We begin with the raw amino-acid sequence, 171 residues long: Large ribosomal subunit protein uL10 (171 aa).

The protein belongs to the universal ribosomal protein uL10 family. In terms of assembly, part of the ribosomal stalk of the 50S ribosomal subunit. The N-terminus interacts with L11 and the large rRNA to form the base of the stalk. The C-terminus forms an elongated spine to which L12 dimers bind in a sequential fashion forming a multimeric L10(L12)X complex.

Functionally, forms part of the ribosomal stalk, playing a central role in the interaction of the ribosome with GTP-bound translation factors. This chain is Large ribosomal subunit protein uL10, found in Corynebacterium glutamicum (strain ATCC 13032 / DSM 20300 / JCM 1318 / BCRC 11384 / CCUG 27702 / LMG 3730 / NBRC 12168 / NCIMB 10025 / NRRL B-2784 / 534).